The following is a 146-amino-acid chain: VFIEFCVEDSKDVNVNFEKSKLTFSCLGGSDNFKHLNEIDLFNNIDPNESKHKRTDRSILCCLRKGESGQAWPRLTKERAKLNWLSVDFNNWKDWEDDSDEDMSNFDRFSEMMNNMGGDDDVDLPEVDGADDDSPDSDDEKMPDLE.

The CS domain maps to 1–76 (VFIEFCVEDS…ESGQAWPRLT (76 aa)). Residues 110–146 (SEMMNNMGGDDDVDLPEVDGADDDSPDSDDEKMPDLE) form a disordered region. Over residues 118 to 139 (GDDDVDLPEVDGADDDSPDSDD) the composition is skewed to acidic residues.

The protein belongs to the p23/wos2 family. As to quaternary structure, binds to telomerase. Binds to the progesterone receptor.

The protein resides in the cytoplasm. The enzyme catalyses prostaglandin H2 = prostaglandin E2. Its pathway is lipid metabolism; prostaglandin biosynthesis. Molecular chaperone. In Gallus gallus (Chicken), this protein is Prostaglandin E synthase 3 (PTGES3).